We begin with the raw amino-acid sequence, 980 residues long: Valine--tRNA ligase (980 aa).

Positions 1 to 40 are disordered; that stretch reads MADKGCEAAQSKDSSAPGSGEPRPKTEKELERERQKAAKL. Over residues 22-40 the composition is skewed to basic and acidic residues; that stretch reads PRPKTEKELERERQKAAKL. Positions 139 to 149 match the 'HIGH' region motif; that stretch reads PNVTGALHIGH. The 'KMSKS' region motif lies at 652–656; that stretch reads KMSKS. Lys655 is a binding site for ATP.

This sequence belongs to the class-I aminoacyl-tRNA synthetase family.

It localises to the cytoplasm. It catalyses the reaction tRNA(Val) + L-valine + ATP = L-valyl-tRNA(Val) + AMP + diphosphate. The protein is Valine--tRNA ligase (vas2) of Schizosaccharomyces pombe (strain 972 / ATCC 24843) (Fission yeast).